The sequence spans 359 residues: 4-hydroxy-3-methylbut-2-en-1-yl diphosphate synthase (flavodoxin) (359 aa).

[4Fe-4S] cluster is bound by residues C264, C267, C299, and E306.

This sequence belongs to the IspG family. Requires [4Fe-4S] cluster as cofactor.

The catalysed reaction is (2E)-4-hydroxy-3-methylbut-2-enyl diphosphate + oxidized [flavodoxin] + H2O + 2 H(+) = 2-C-methyl-D-erythritol 2,4-cyclic diphosphate + reduced [flavodoxin]. It functions in the pathway isoprenoid biosynthesis; isopentenyl diphosphate biosynthesis via DXP pathway; isopentenyl diphosphate from 1-deoxy-D-xylulose 5-phosphate: step 5/6. In terms of biological role, converts 2C-methyl-D-erythritol 2,4-cyclodiphosphate (ME-2,4cPP) into 1-hydroxy-2-methyl-2-(E)-butenyl 4-diphosphate. The polypeptide is 4-hydroxy-3-methylbut-2-en-1-yl diphosphate synthase (flavodoxin) (Helicobacter pylori (strain P12)).